Here is an 82-residue protein sequence, read N- to C-terminus: Putative defensin-like protein 191 (82 aa).

Residues 1-28 form the signal peptide; it reads MAKSVNATGFITYMVIFLILTGISRVKA. Intrachain disulfides connect cysteine 33/cysteine 79, cysteine 46/cysteine 65, cysteine 51/cysteine 74, and cysteine 55/cysteine 76.

Belongs to the DEFL family.

Its subcellular location is the secreted. This is Putative defensin-like protein 191 from Arabidopsis thaliana (Mouse-ear cress).